An 873-amino-acid chain; its full sequence is Zinc fingers and homeoboxes protein 1 (873 aa).

Residues 1 to 63 (MASRRKSTTP…ESVDSDNQQN (63 aa)) are disordered. Positions 18 to 30 (QDPDLELISDLEE) are enriched in acidic residues. Phosphothreonine is present on Thr-36. Phosphoserine occurs at positions 45, 47, and 48. 2 C2H2-type zinc fingers span residues 70–93 (YECK…DSEH) and 102–125 (YVCV…LKYH). Lys-159 is covalently cross-linked (Glycyl lysine isopeptide (Lys-Gly) (interchain with G-Cter in SUMO2)). Positions 198–247 (VHHNSAEGTSEEKENGVKASREENAENTSSSASESNTSTSTVNQVHPSPA) are disordered. Ser-202 carries the phosphoserine modification. The segment covering 207-221 (SEEKENGVKASREEN) has biased composition (basic and acidic residues). Residues 223–238 (ENTSSSASESNTSTST) show a composition bias toward low complexity. Residues 272 to 432 (NSNLVPKVLI…QTNVQKSQVP (161 aa)) are required for dimerization. The required for interaction with NFYA stretch occupies residues 272-564 (NSNLVPKVLI…SQPKQSWNPF (293 aa)). Positions 284-346 (NSIPTYNAAL…LKHGVSWTPE (63 aa)) form a DNA-binding region, homeobox 1. Positions 430–455 (QVPAAQPAAETKPATAAVPSSPSVRP) are disordered. Glycyl lysine isopeptide (Lys-Gly) (interchain with G-Cter in SUMO2) cross-links involve residues Lys-441 and Lys-485. Residues 464 to 526 (SFGIRAKKTK…YNQRNSKSNQ (63 aa)) constitute a DNA-binding region (homeobox 2). Disordered stretches follow at residues 540 to 568 (IDSS…PDFA), 627 to 664 (DEKV…TGKI), and 731 to 767 (SSSL…KRMN). The segment covering 551 to 560 (AAAASQPKQS) has biased composition (low complexity). The segment at residues 569–631 (PQKFKEKTAE…TKALKDEKVE (63 aa)) is a DNA-binding region (homeobox 3). Lys-629 participates in a covalent cross-link: Glycyl lysine isopeptide (Lys-Gly) (interchain with G-Cter in SUMO2). The residue at position 648 (Ser-648) is a Phosphoserine. Positions 660–722 (GTGKICKKTP…YAWKNGNLKW (63 aa)) form a DNA-binding region, homeobox 4. Residues 734-768 (LNGLSSLRKRGRGRPKGRGRGRPRGRPRGGKRMNT) form a required for nuclear localization region. A compositionally biased stretch (basic residues) spans 740–764 (LRKRGRGRPKGRGRGRPRGRPRGGK). Ser-774 carries the post-translational modification Phosphoserine. Residues 777-832 (KFKTGTAILKDYYLKHKFLNEQDLDELVNRSHMGYEQVREWFAERQRRSELGIELF) constitute a DNA-binding region (homeobox 5). The segment at 829-873 (IELFEENEEEDEVIDDQEEDEEETDDSDTWEPPRHVKRKLSKSDD) is disordered. A compositionally biased stretch (acidic residues) spans 831-857 (LFEENEEEDEVIDDQEEDEEETDDSDT). The segment at 831–873 (LFEENEEEDEVIDDQEEDEEETDDSDTWEPPRHVKRKLSKSDD) is required for repressor activity. Residues 863–873 (HVKRKLSKSDD) are compositionally biased toward basic residues.

This sequence belongs to the ZHX family. As to quaternary structure, forms homodimers. Heterodimer (via HD1 domain) with ZHX2 (via HD1 domain). Also forms a heterodimer with ZHX3 which is a prerequisite for repressor activity. Interacts with ATF7IP and NFYA. Interacts (via homeobox domains) with DNMT3B (via PWWP domain). In terms of tissue distribution, ubiquitously expressed.

It is found in the nucleus. Functionally, acts as a transcriptional repressor. Increases DNMT3B-mediated repressive transcriptional activity when DNMT3B is tethered to DNA. May link molecule between DNMT3B and other co-repressor proteins. The protein is Zinc fingers and homeoboxes protein 1 (Zhx1) of Rattus norvegicus (Rat).